The chain runs to 324 residues: Putative ribose-phosphate pyrophosphokinase 1 (324 aa).

Residues 43–45 and 102–103 contribute to the ATP site; these read DGE and RQ. His-136 contributes to the Mg(2+) binding site. D-ribose 5-phosphate contacts are provided by residues Asp-225 and 229-233; that span reads NTGQT.

The protein belongs to the ribose-phosphate pyrophosphokinase family. Class I subfamily. As to quaternary structure, homohexamer. It depends on Mg(2+) as a cofactor.

It localises to the cytoplasm. It carries out the reaction D-ribose 5-phosphate + ATP = 5-phospho-alpha-D-ribose 1-diphosphate + AMP + H(+). It participates in metabolic intermediate biosynthesis; 5-phospho-alpha-D-ribose 1-diphosphate biosynthesis; 5-phospho-alpha-D-ribose 1-diphosphate from D-ribose 5-phosphate (route I): step 1/1. Functionally, involved in the biosynthesis of the central metabolite phospho-alpha-D-ribosyl-1-pyrophosphate (PRPP) via the transfer of pyrophosphoryl group from ATP to 1-hydroxyl of ribose-5-phosphate (Rib-5-P). This chain is Putative ribose-phosphate pyrophosphokinase 1, found in Enterococcus faecalis (strain ATCC 700802 / V583).